We begin with the raw amino-acid sequence, 672 residues long: PHD finger protein MALE STERILITY 1 (672 aa).

The PHD-type zinc finger occupies 614 to 664 (RIECECGATEEDGERMVCCDICEVWQHTRCVGVQHNEEVPRIFLCQSCDQH).

In terms of tissue distribution, in closed flower buds, especially in anthers.

It is found in the nucleus. In terms of biological role, transcriptional activator required for anther and post-meiotic pollen development and maturation. Seems to regulate inflorescence branching and floral development. May control tapetal development by directly regulating tapetal programmed cell death (PCD) and breakdown. Implicated in pollen cytosolic components and wall development (e.g. exine and intine formation). This is PHD finger protein MALE STERILITY 1 (MS1) from Arabidopsis thaliana (Mouse-ear cress).